A 440-amino-acid chain; its full sequence is Probable carboxypeptidase AFUB_072730 (440 aa).

An N-terminal signal peptide occupies residues 1-16 (MKPLTSLLLSAALSAA). N-linked (GlcNAc...) asparagine glycosylation is found at asparagine 87 and asparagine 149. Aspartate 165 is a Zn(2+) binding site. Glutamate 197 acts as the Proton acceptor in catalysis. A Zn(2+)-binding site is contributed by glutamate 198. Asparagine 353 and asparagine 372 each carry an N-linked (GlcNAc...) asparagine glycan.

It belongs to the peptidase M20A family. The cofactor is Zn(2+).

It localises to the secreted. The chain is Probable carboxypeptidase AFUB_072730 from Aspergillus fumigatus (strain CBS 144.89 / FGSC A1163 / CEA10) (Neosartorya fumigata).